We begin with the raw amino-acid sequence, 43 residues long: SPbeta prophage-derived uncharacterized protein YopG (43 aa).

This is SPbeta prophage-derived uncharacterized protein YopG (yopG) from Bacillus subtilis (strain 168).